A 354-amino-acid polypeptide reads, in one-letter code: MNDSAHIDYARYDHIRPLLWTGDALELLDQRKLPFEVAHVRCDSSDAVAEAIHSLAVRGAPAIGIAAGWGVVLAARDIAADDGSAALQKLEPALLRLNAARPTAVNLAWALMRMRRVLGAAGADWREVIAREAQAIADEDLAANRHMGALGAALIAPGSGVLTHCNTGSLATAGFGTALGVIRAGMAQQRIAKVFAGETRPWLQGARLTVWELHQDGIDATLIADSAASHLMKSGLVQWVIVGADRICANGDTANKIGTYQLAIAARHHGVKFMVVAPSSTVDMATASGDQIEIEQRDPGELFGVGGVRTVADGIHAWNPVFDVTPGDLIDAIVTERGVIAQPDLARMQAAFGS.

Substrate is bound by residues 58-60 (RGA), arginine 101, and glutamine 204. Aspartate 245 (proton donor) is an active-site residue. 255-256 (NK) contributes to the substrate binding site.

This sequence belongs to the eIF-2B alpha/beta/delta subunits family. MtnA subfamily.

It carries out the reaction 5-(methylsulfanyl)-alpha-D-ribose 1-phosphate = 5-(methylsulfanyl)-D-ribulose 1-phosphate. It functions in the pathway amino-acid biosynthesis; L-methionine biosynthesis via salvage pathway; L-methionine from S-methyl-5-thio-alpha-D-ribose 1-phosphate: step 1/6. Catalyzes the interconversion of methylthioribose-1-phosphate (MTR-1-P) into methylthioribulose-1-phosphate (MTRu-1-P). The sequence is that of Methylthioribose-1-phosphate isomerase from Xanthomonas axonopodis pv. citri (strain 306).